A 620-amino-acid polypeptide reads, in one-letter code: MTLDSSKYPLLNLVNEPAHLRDLAQDKLPAFSHELRDYLLNSVSQSSGHLASGLGTVELTVALHYVYNTPDDRLVWDVGHQAYPHKILTGRRDLMHTIRKKDGLHPFPFREESQYDTFSVGHSSTSISAALGMSIAAQKEGKGRKTVAVIGDGAITAGMAFEAMNHLGDVKSDMLIILNDNEMSISENVGALTNHFARILSGSFYTNIREGSKKLLSGVPPVKQLASKMEEHIKGMMIPGTFFEELGLNYIGPIDGHDVNMLVDTLRNMRNLKGPQLLHIKTQKGKGYKPAEADPIGYHGVPKFDPNTSSLPKSKPGAATFSNVFGDWLCDIAKQDSKLMAITPAMREGSGMVRFSKEHPDQYFDVAIAEQHAVTLAAGFACEGLKPVVAIYSSFLQRAYDQLIHDVALQNLPVLFAIDRAGIVGADGETHQGAYDLSFMRCIPNMVIMAPSDTNECRHMLYTGYQANCPVAVRYPRGSAGTAEIATNMQLLEIGKADVVKQGAKVAILSFGTLLENAQLAADELNATLVNMRFIKPLDTALLDELINSHDVIVTLEDNAISGGAGSAVNEYLATQKAQVSILNLGIPDEFIKHGTQDEMHDEMGLGEQGILTAIKAFIN.

Residues H80 and 121–123 contribute to the thiamine diphosphate site; that span reads GHS. Residue D152 coordinates Mg(2+). Thiamine diphosphate contacts are provided by residues 153-154, N181, Y288, and E370; that span reads GA. N181 contributes to the Mg(2+) binding site.

The protein belongs to the transketolase family. DXPS subfamily. Homodimer. The cofactor is Mg(2+). Requires thiamine diphosphate as cofactor.

It catalyses the reaction D-glyceraldehyde 3-phosphate + pyruvate + H(+) = 1-deoxy-D-xylulose 5-phosphate + CO2. The protein operates within metabolic intermediate biosynthesis; 1-deoxy-D-xylulose 5-phosphate biosynthesis; 1-deoxy-D-xylulose 5-phosphate from D-glyceraldehyde 3-phosphate and pyruvate: step 1/1. Its function is as follows. Catalyzes the acyloin condensation reaction between C atoms 2 and 3 of pyruvate and glyceraldehyde 3-phosphate to yield 1-deoxy-D-xylulose-5-phosphate (DXP). The protein is 1-deoxy-D-xylulose-5-phosphate synthase of Pseudoalteromonas translucida (strain TAC 125).